Here is a 366-residue protein sequence, read N- to C-terminus: NAD(P)H-quinone oxidoreductase subunit 1, chloroplastic (366 aa).

Transmembrane regions (helical) follow at residues 28-48, 105-125, 128-148, 250-270, 271-291, 303-323, and 346-366; these read IWLL…VLVI, IAVI…HLVL, LSIG…GLLM, SGIK…VSSL, FVTV…FIFI, IFGM…FLFI, and FLLP…LLSL.

This sequence belongs to the complex I subunit 1 family. As to quaternary structure, NDH is composed of at least 16 different subunits, 5 of which are encoded in the nucleus.

It localises to the plastid. The protein resides in the chloroplast thylakoid membrane. The catalysed reaction is a plastoquinone + NADH + (n+1) H(+)(in) = a plastoquinol + NAD(+) + n H(+)(out). It carries out the reaction a plastoquinone + NADPH + (n+1) H(+)(in) = a plastoquinol + NADP(+) + n H(+)(out). Its function is as follows. NDH shuttles electrons from NAD(P)H:plastoquinone, via FMN and iron-sulfur (Fe-S) centers, to quinones in the photosynthetic chain and possibly in a chloroplast respiratory chain. The immediate electron acceptor for the enzyme in this species is believed to be plastoquinone. Couples the redox reaction to proton translocation, and thus conserves the redox energy in a proton gradient. The protein is NAD(P)H-quinone oxidoreductase subunit 1, chloroplastic of Nandina domestica (Heavenly bamboo).